A 202-amino-acid chain; its full sequence is Large ribosomal subunit protein mL40 (202 aa).

The interval 42–79 (IQHQQTASYASKGKSGPPAGMFSGQKAGSKKSKGPKQV) is disordered.

It belongs to the mitochondrion-specific ribosomal protein mL40 family. In terms of assembly, component of the mitochondrial large ribosomal subunit (mt-LSU). Mature N.crassa 74S mitochondrial ribosomes consist of a small (37S) and a large (54S) subunit. The 37S small subunit contains a 16S ribosomal RNA (16S mt-rRNA) and 32 different proteins. The 54S large subunit contains a 23S rRNA (23S mt-rRNA) and 42 different proteins. mL40 is binding to NAD.

The protein resides in the mitochondrion. Functionally, component of the mitochondrial ribosome (mitoribosome), a dedicated translation machinery responsible for the synthesis of mitochondrial genome-encoded proteins, including at least some of the essential transmembrane subunits of the mitochondrial respiratory chain. The mitoribosomes are attached to the mitochondrial inner membrane and translation products are cotranslationally integrated into the membrane. This chain is Large ribosomal subunit protein mL40 (mrpl28), found in Neurospora crassa (strain ATCC 24698 / 74-OR23-1A / CBS 708.71 / DSM 1257 / FGSC 987).